A 394-amino-acid chain; its full sequence is Beta-ketothiolase BktB (394 aa).

Catalysis depends on Cys90, which acts as the Acyl-thioester intermediate. Catalysis depends on proton acceptor residues His350 and Cys380.

The protein belongs to the thiolase-like superfamily. Thiolase family.

The catalysed reaction is an acyl-CoA + acetyl-CoA = a 3-oxoacyl-CoA + CoA. It catalyses the reaction 2 acetyl-CoA = acetoacetyl-CoA + CoA. Functionally, required for efficient production of poly(beta-hydroxybutyrate-co-beta-hydroxyvalerate) (PHBV). Catalyzes the condensation of acetyl-CoA and propionyl-CoA to form beta-ketovaleryl-CoA, and the condensation of two acetyl-CoA molecules to form acetoacetyl-CoA. The chain is Beta-ketothiolase BktB (bktB) from Cupriavidus necator (strain ATCC 17699 / DSM 428 / KCTC 22496 / NCIMB 10442 / H16 / Stanier 337) (Ralstonia eutropha).